Here is a 428-residue protein sequence, read N- to C-terminus: Glutamate-1-semialdehyde 2,1-aminomutase (428 aa).

Position 267 is an N6-(pyridoxal phosphate)lysine (K267).

Belongs to the class-III pyridoxal-phosphate-dependent aminotransferase family. HemL subfamily. As to quaternary structure, homodimer. Pyridoxal 5'-phosphate is required as a cofactor.

Its subcellular location is the cytoplasm. The enzyme catalyses (S)-4-amino-5-oxopentanoate = 5-aminolevulinate. Its pathway is porphyrin-containing compound metabolism; protoporphyrin-IX biosynthesis; 5-aminolevulinate from L-glutamyl-tRNA(Glu): step 2/2. The sequence is that of Glutamate-1-semialdehyde 2,1-aminomutase from Desulforapulum autotrophicum (strain ATCC 43914 / DSM 3382 / VKM B-1955 / HRM2) (Desulfobacterium autotrophicum).